The sequence spans 494 residues: Glycerol kinase (494 aa).

Thr13 is an ADP binding site. The ATP site is built by Thr13, Thr14, and Ser15. Thr13 lines the sn-glycerol 3-phosphate pocket. Arg17 contributes to the ADP binding site. Arg83, Glu84, Tyr135, and Asp244 together coordinate sn-glycerol 3-phosphate. Positions 83, 84, 135, 244, and 245 each coordinate glycerol. ADP contacts are provided by Thr266 and Gly309. Positions 266, 309, 313, and 410 each coordinate ATP. Positions 410 and 414 each coordinate ADP.

It belongs to the FGGY kinase family.

It carries out the reaction glycerol + ATP = sn-glycerol 3-phosphate + ADP + H(+). The protein operates within polyol metabolism; glycerol degradation via glycerol kinase pathway; sn-glycerol 3-phosphate from glycerol: step 1/1. Inhibited by fructose 1,6-bisphosphate (FBP). Functionally, key enzyme in the regulation of glycerol uptake and metabolism. Catalyzes the phosphorylation of glycerol to yield sn-glycerol 3-phosphate. The protein is Glycerol kinase of Shewanella oneidensis (strain ATCC 700550 / JCM 31522 / CIP 106686 / LMG 19005 / NCIMB 14063 / MR-1).